We begin with the raw amino-acid sequence, 189 residues long: MIIYYSANQSKSGLKILLKNEPCLILENQFVKPGKGQPFNRIKIKKLISGKIFTKIFKSNEKLIYADVLDVKVKSLYKDKKYWNFIKKENFEQFKISKKNLGEKYKWIIEQLECIVTFWDENPINITLPRFVDIKVCNANFDIKGDTIKSGNKYIILTTGAIIKAPIFIRSEEIVRVDTNLGEYVSRIK.

K35 carries the N6-(3,6-diaminohexanoyl)-5-hydroxylysine modification.

This sequence belongs to the elongation factor P family. May be beta-lysylated on the epsilon-amino group of Lys-35 by the combined action of EpmA and EpmB, and then hydroxylated on the C5 position of the same residue by EpmC (if this protein is present). Lysylation is critical for the stimulatory effect of EF-P on peptide-bond formation. The lysylation moiety may extend toward the peptidyltransferase center and stabilize the terminal 3-CCA end of the tRNA. Hydroxylation of the C5 position on Lys-35 may allow additional potential stabilizing hydrogen-bond interactions with the P-tRNA.

The protein localises to the cytoplasm. It functions in the pathway protein biosynthesis; polypeptide chain elongation. Involved in peptide bond synthesis. Alleviates ribosome stalling that occurs when 3 or more consecutive Pro residues or the sequence PPG is present in a protein, possibly by augmenting the peptidyl transferase activity of the ribosome. Modification of Lys-35 is required for alleviation. The protein is Elongation factor P of Wigglesworthia glossinidia brevipalpis.